Reading from the N-terminus, the 2907-residue chain is Fibrillin-2 (2907 aa).

Positions 1–28 are cleaved as a signal peptide; that stretch reads MGRRRRLCLQPYFVWLGCVALWAQGTDG. Residues 26 to 58 are disordered; the sequence is TDGQPQPPPPKTLRPQPPPQQVRPAVAGSEGGF. Positions 29–77 are excised as a propeptide; that stretch reads QPQPPPPKTLRPQPPPQQVRPAVAGSEGGFMGPEYRDEGAVAASRVRRR. A compositionally biased stretch (pro residues) spans 30–46; sequence PQPPPPKTLRPQPPPQQ. EGF-like domains lie at 111-142, 145-176, and 176-208; these read IVPI…PTCG, SIQQ…TYCG, and GQPV…PQCE. Intrachain disulfides connect Cys115–Cys124, Cys119–Cys130, Cys132–Cys141, Cys149–Cys159, Cys153–Cys164, Cys166–Cys175, Cys180–Cys190, Cys184–Cys196, and Cys198–Cys207. Positions 149–359 are interaction with MFAP4; it reads CSVRCMNGGT…VTSTDGSRCI (211 aa). The TB 1 domain maps to 214 to 266; it reads GPCFTQVNNQMCQGQLTGIVCTKTLCCATIGRAWGHPCEMCPAQPQPCRRGFI. The 42-residue stretch at 276-317 folds into the EGF-like 4; calcium-binding domain; the sequence is DVDECQAIPGLCQGGNCINTVGSFECRCPAGHKQSETTQKCE. 6 disulfides stabilise this stretch: Cys280–Cys292, Cys287–Cys301, Cys303–Cys316, Cys322–Cys334, Cys329–Cys343, and Cys345–Cys358. Ser298 carries an O-linked (Glc) serine glycan. Residues 318-359 enclose the EGF-like 5; calcium-binding domain; it reads DIDECSVIPGVCETGDCSNTVGSYFCLCPRGFVTSTDGSRCI. The O-linked (Glc) serine glycan is linked to Ser340. A TB 2 domain is found at 364–417; the sequence is GTCFSGLVNGRCAQELPGRMAKAQCCCEPGRCWSIGTIPEACPVRGSEEYRRLC. Asn485 carries N-linked (GlcNAc...) asparagine glycosylation. In terms of domain architecture, EGF-like 6 spans 487-527; that stretch reads TIDICKHHANLCLNGRCIPTVSSYRCECNMGYKQDANGDCI. Cystine bridges form between Cys491–Cys503, Cys498–Cys512, Cys514–Cys526, Cys532–Cys542, Cys537–Cys551, Cys553–Cys566, Cys572–Cys584, Cys579–Cys593, Cys595–Cys608, Cys614–Cys625, Cys620–Cys634, Cys636–Cys649, Cys655–Cys666, Cys661–Cys675, and Cys677–Cys690. O-linked (Glc) serine glycosylation occurs at Ser509. Residues 528–567 form the EGF-like 7; calcium-binding domain; sequence DVDECTSNPCSNGDCVNTPGSYYCKCHAGFQRTPTKQACI. Ser548 carries O-linked (Glc) serine glycosylation. An EGF-like 8; calcium-binding domain is found at 568-609; the sequence is DIDECIQNGVLCKNGRCVNTDGSFQCICNAGFELTTDGKNCV. Ser590 carries O-linked (Glc) serine glycosylation. An EGF-like 9; calcium-binding domain is found at 610–650; sequence DHDECTTTNMCLNGMCINEDGSFKCVCKPGFILAPNGRYCT. Ser631 is a glycosylation site (O-linked (Glc) serine). Residues 651 to 691 enclose the EGF-like 10; calcium-binding domain; sequence DVDECQTPGICMNGHCINNEGSFRCDCPPGLAVGVDGRVCV. A glycan (O-linked (Glc) serine) is linked at Ser672. One can recognise a TB 3 domain in the interval 697–749; that stretch reads STCYGEIKKGVCVRPFPGAVTKSECCCANPDYGFGEPCQPCPAKNSAEFHGLC. One can recognise an EGF-like 11; calcium-binding domain in the interval 761-802; that stretch reads DINECALDPDICANGICENLRGSYRCNCNSGYEPDASGRNCI. 9 disulfides stabilise this stretch: Cys765–Cys777, Cys772–Cys786, Cys788–Cys801, Cys807–Cys819, Cys814–Cys828, Cys830–Cys843, Cys849–Cys859, Cys854–Cys868, and Cys870–Cys883. Residues 803 to 844 enclose the EGF-like 12; calcium-binding domain; it reads DIDECLVNRLLCDNGLCRNTPGSYSCTCPPGYVFRTETETCE. A glycan (O-linked (Glc) serine) is linked at Ser825. The EGF-like 13; calcium-binding domain occupies 845-883; sequence DVNECESNPCVNGACRNNLGSFHCECSPGSKLSSTGLIC. The O-linked (Glc) serine glycan is linked to Ser865. In terms of domain architecture, TB 4 spans 889–940; the sequence is GTCWLNIQDNRCEVNINGATLKSECCATLGAAWGSPCERCELDAACPRGFAR. The EGF-like 14; calcium-binding domain maps to 948 to 989; that stretch reads DVNECEVFPGVCPNGRCVNSKGSFHCECPEGLTLDGTGRVCL. Intrachain disulfides connect Cys952–Cys964, Cys959–Cys973, and Cys975–Cys988. The O-linked (Glc) serine glycan is linked to Ser970. The 52-residue stretch at 994–1045 folds into the TB 5 domain; that stretch reads EHCFLKWDEDECIHPVPGKFRMDACCCAVGAAWGTECEECPKPGTKEYETLC. One can recognise an EGF-like 15; calcium-binding domain in the interval 1066-1107; it reads DINECKAFPGMCTYGKCRNTIGSFKCRCNNGFALDMEERNCT. Intrachain disulfides connect Cys1070/Cys1082, Cys1077/Cys1091, Cys1093/Cys1106, Cys1112/Cys1124, Cys1119/Cys1133, Cys1135/Cys1149, Cys1155/Cys1167, Cys1162/Cys1176, Cys1178/Cys1191, Cys1197/Cys1209, Cys1204/Cys1218, Cys1220/Cys1233, Cys1239/Cys1250, Cys1246/Cys1259, Cys1261/Cys1274, Cys1280/Cys1292, Cys1287/Cys1301, Cys1303/Cys1316, Cys1322/Cys1334, Cys1329/Cys1343, Cys1345/Cys1358, Cys1364/Cys1377, Cys1371/Cys1386, Cys1388/Cys1399, Cys1405/Cys1418, Cys1412/Cys1427, Cys1429/Cys1440, Cys1446/Cys1458, Cys1453/Cys1467, Cys1469/Cys1482, Cys1488/Cys1499, Cys1494/Cys1508, Cys1510/Cys1523, Cys1529/Cys1540, Cys1535/Cys1549, and Cys1551/Cys1564. O-linked (Glc) serine glycosylation is present at Ser1088. The N-linked (GlcNAc...) asparagine glycan is linked to Asn1105. An EGF-like 16; calcium-binding domain is found at 1108 to 1150; the sequence is DIDECRISPDLCGSGICVNTPGSFECECFEGYESGFMMMKNCM. Residues 1151–1192 form the EGF-like 17; calcium-binding domain; it reads DIDECERNPLLCRGGTCVNTEGSFQCDCPLGHELSPSREDCV. O-linked (Glc) serine glycosylation occurs at Ser1173. The EGF-like 18; calcium-binding domain occupies 1193-1234; it reads DINECSLSDNLCRNGKCVNMIGTYQCSCNPGYQATPDRQGCT. O-linked (Glc) threonine glycosylation is present at Thr1215. Positions 1235–1275 constitute an EGF-like 19; calcium-binding domain; sequence DIDECMIMNGGCDTQCTNSEGSYECSCSEGYALMPDGRSCA. The O-linked (Glc) serine glycan is linked to Ser1256. The EGF-like 20; calcium-binding domain maps to 1276 to 1317; sequence DIDECENNPDICDGGQCTNIPGEYRCLCYDGFMASMDMKTCI. The EGF-like 21; calcium-binding domain maps to 1318 to 1359; the sequence is DVNECDLNPNICMFGECENTKGSFICHCQLGYSVKKGTTGCT. The O-linked (Glc) serine glycan is linked to Ser1340. An EGF-like 22; calcium-binding domain is found at 1360–1400; the sequence is DVDECEIGAHNCDMHASCLNVPGSFKCSCREGWVGNGIKCI. The O-linked (Glc) serine glycan is linked to Ser1383. One can recognise an EGF-like 23; calcium-binding domain in the interval 1401-1441; that stretch reads DLDECANGTHQCSINAQCVNTPGSYRCACSEGFTGDGFTCS. Asn1407 is a glycosylation site (N-linked (GlcNAc...) asparagine). In terms of domain architecture, EGF-like 24; calcium-binding spans 1442–1483; the sequence is DVDECAENTNLCENGQCLNVPGAYRCECEMGFTPASDSRSCQ. The 41-residue stretch at 1484-1524 folds into the EGF-like 25; calcium-binding domain; sequence DIDECSFQNICVFGTCNNLPGMFHCICDDGYELDRTGGNCT. Asn1522 is a glycosylation site (N-linked (GlcNAc...) asparagine). Positions 1525–1565 constitute an EGF-like 26; calcium-binding domain; that stretch reads DIDECADPINCVNGLCVNTPGRYECNCPPDFQLNPTGVGCV. Positions 1570-1626 constitute a TB 6 domain; it reads GNCYLKFGPRGDGSLSCNTEVGVGVSRSSCCCSLGKAWGNPCETCPPVNSTEYYTLC. The N-linked (GlcNAc...) asparagine glycan is linked to Asn1618. Residues 1643-1684 enclose the EGF-like 27; calcium-binding domain; that stretch reads DIDECQELPGLCQGGNCINTFGSFQCECPQGYYLSEETRICE. 6 disulfides stabilise this stretch: Cys1647-Cys1659, Cys1654-Cys1668, Cys1670-Cys1683, Cys1689-Cys1701, Cys1696-Cys1710, and Cys1712-Cys1725. Ser1665 carries an O-linked (Glc) serine glycan. An EGF-like 28; calcium-binding domain is found at 1685 to 1726; that stretch reads DIDECFAHPGVCGPGTCYNTLGNYTCICPPEYMQVNGGHNCM. N-linked (GlcNAc...) asparagine glycosylation occurs at Asn1707. The segment at 1728 to 2164 is interaction with MFAP4; that stretch reads MRKSFCYRSY…VPSLHDTRED (437 aa). A TB 7 domain is found at 1731–1784; that stretch reads SFCYRSYNGTTCENELPFNVTKRMCCCTYNVGKAWNKPCEPCPTPGTADFKTIC. 2 N-linked (GlcNAc...) asparagine glycosylation sites follow: Asn1738 and Asn1749. The region spanning 1801-1842 is the EGF-like 29; calcium-binding domain; that stretch reads DIDECKEIPGICANGVCINQIGSFRCECPTGFSYNDLLLVCE. Intrachain disulfides connect Cys1805–Cys1817, Cys1812–Cys1826, Cys1828–Cys1841, Cys1847–Cys1860, Cys1854–Cys1869, Cys1871–Cys1883, Cys1889–Cys1901, Cys1896–Cys1910, Cys1912–Cys1925, Cys1931–Cys1941, Cys1936–Cys1950, Cys1952–Cys1964, Cys1970–Cys1983, Cys1978–Cys1992, Cys1994–Cys2007, Cys2013–Cys2025, Cys2020–Cys2034, Cys2036–Cys2047, Cys2053–Cys2065, Cys2060–Cys2074, and Cys2076–Cys2089. Residues 1843-1884 form the EGF-like 30; calcium-binding domain; it reads DIDECSNGDNLCQRNADCINSPGSYRCECAAGFKLSPNGACV. Residue Ser1866 is glycosylated (O-linked (Glc) serine). The EGF-like 31; calcium-binding domain occupies 1885-1926; that stretch reads DRNECLEIPNVCSHGLCVDLQGSYQCICNNGFKASQDQTMCM. The 39-residue stretch at 1927–1965 folds into the EGF-like 32; calcium-binding domain; that stretch reads DVDECERHPCGNGTCKNTVGSYNCLCYPGFELTHNNDCL. N-linked (GlcNAc...) asparagine glycosylation is present at Asn1938. The O-linked (Glc) serine glycan is linked to Ser1947. Residues 1966 to 2008 enclose the EGF-like 33; calcium-binding domain; sequence DIDECSSFFGQVCRNGRCFNEIGSFKCLCNEGYELTPDGKNCI. The O-linked (Glc) serine glycan is linked to Ser1989. Residues 2009 to 2048 enclose the EGF-like 34; calcium-binding domain; sequence DTNECVALPGSCSPGTCQNLEGSFRCICPPGYEVRSENCI. Residues 2049 to 2090 enclose the EGF-like 35; calcium-binding domain; it reads DINECDEDPNICLFGSCTNTPGGFQCICPPGFVLSDNGRRCF. The 54-residue stretch at 2095-2148 folds into the TB 8 domain; that stretch reads SFCFTNFENGKCSVPKAFNTTKAKCCCSKMPGEGWGDPCELCPKDDEVAFQDLC. Asn2113 carries N-linked (GlcNAc...) asparagine glycosylation. The 42-residue stretch at 2164-2205 folds into the EGF-like 36; calcium-binding domain; it reads DVNECLESPGICSNGQCINTDGSFRCECPMGYNLDYTGVRCV. Intrachain disulfides connect Cys2168-Cys2180, Cys2175-Cys2189, Cys2191-Cys2204, Cys2210-Cys2221, Cys2216-Cys2230, Cys2232-Cys2244, Cys2250-Cys2261, Cys2257-Cys2270, Cys2272-Cys2285, Cys2291-Cys2305, Cys2298-Cys2314, Cys2316-Cys2329, Cys2335-Cys2347, Cys2342-Cys2356, and Cys2358-Cys2371. O-linked (Glc) serine glycosylation is present at Ser2186. Residues 2206-2245 form the EGF-like 37; calcium-binding domain; the sequence is DTDECSIGNPCGNGTCTNVIGSFECTCNEGFEPGPMMNCE. Residue Asn2218 is glycosylated (N-linked (GlcNAc...) asparagine). Residues 2246-2286 form the EGF-like 38; calcium-binding domain; the sequence is DINECAQNPLLCAFRCMNTFGSYECTCPVGYALREDQKMCK. The O-linked (Glc) serine glycan is linked to Ser2267. Residues 2287-2330 form the EGF-like 39; calcium-binding domain; it reads DLDECAEGLHDCESRGMMCKNLIGTFMCICPPGMARRPDGEGCV. Residues 2331 to 2372 form the EGF-like 40; calcium-binding domain; sequence DENECRTKPGICENGRCVNIIGSYRCECNEGFQSSSSGTECL. The O-linked (Glc) serine glycan is linked to Ser2353. One can recognise a TB 9 domain in the interval 2377-2430; sequence GLCFAEVLQTMCQMASSSRNLVTKSECCCDGGRGWGHQCELCPLPGTAQYKKIC. The region spanning 2442 to 2483 is the EGF-like 41; calcium-binding domain; sequence DIDECKVMPSLCTNGQCVNTMGSFRCFCKVGYTTDISGTACV. 21 cysteine pairs are disulfide-bonded: Cys2446–Cys2458, Cys2453–Cys2467, Cys2469–Cys2482, Cys2488–Cys2499, Cys2495–Cys2508, Cys2510–Cys2523, Cys2529–Cys2540, Cys2536–Cys2549, Cys2551–Cys2562, Cys2568–Cys2581, Cys2575–Cys2590, Cys2592–Cys2605, Cys2611–Cys2621, Cys2617–Cys2630, Cys2632–Cys2645, Cys2651–Cys2662, Cys2657–Cys2671, Cys2673–Cys2686, Cys2692–Cys2703, Cys2699–Cys2712, and Cys2714–Cys2726. O-linked (Glc) serine glycosylation occurs at Ser2464. Positions 2484–2524 constitute an EGF-like 42; calcium-binding domain; it reads DLDECSQSPKPCNFICKNTKGSYQCSCPRGYVLQEDGKTCK. O-linked (Glc) serine glycosylation is present at Ser2505. The EGF-like 43; calcium-binding domain occupies 2525 to 2563; it reads DLDECQTKQHNCQFLCVNTLGGFTCKCPPGFTQHHTACI. The 43-residue stretch at 2564–2606 folds into the EGF-like 44; calcium-binding domain; that stretch reads DNNECGSQPSLCGAKGICQNTPGSFSCECQRGFSLDASGLNCE. The O-linked (Glc) serine glycan is linked to Ser2587. The 40-residue stretch at 2607–2646 folds into the EGF-like 45; calcium-binding domain; it reads DVDECDGNHRCQHGCQNILGGYRCGCPQGYVQHYQWNQCV. The EGF-like 46; calcium-binding domain occupies 2647 to 2687; it reads DENECSNPGACGSASCYNTLGSYKCACPSGFSFDQFSSACH. The O-linked (Glc) serine glycan is linked to Ser2668. The EGF-like 47; calcium-binding domain maps to 2688 to 2727; the sequence is DVNECSSSKNPCSYGCSNTEGGYLCGCPPGYFRVGQGHCV. Asn2803 carries N-linked (GlcNAc...) asparagine glycosylation.

Belongs to the fibrillin family. Interacts with BMP2, BMP4, BMP7, BMP10 and GDF5. Interacts with MFAP2 and MFAP5. Interacts with ADAMTSL5. Interacts with MFAP4. In terms of processing, N-glycosylated. O-glycosylated on serine residues by POGLUT2 and POGLUT3. In terms of tissue distribution, widely expressed.

Its subcellular location is the secreted. The protein localises to the extracellular space. It localises to the extracellular matrix. In terms of biological role, fibrillins are structural components of 10-12 nm extracellular calcium-binding microfibrils, which occur either in association with elastin or in elastin-free bundles. Fibrillin-2-containing microfibrils regulate the early process of elastic fiber assembly. Regulates osteoblast maturation by controlling TGF-beta bioavailability and calibrating TGF-beta and BMP levels, respectively. Functionally, hormone secreted by trophoblasts that promotes trophoblast invasiveness. Has glucogenic activity: is able to increase plasma glucose levels. The polypeptide is Fibrillin-2 (Mus musculus (Mouse)).